Here is a 208-residue protein sequence, read N- to C-terminus: Thioesterase 1/protease 1/lysophospholipase L1 (208 aa).

Residues 1–26 form the signal peptide; the sequence is MMNFNNVFRWHLPFLFLVLLTFRAAA. The active-site Nucleophile is Ser36. 2 residues coordinate substrate: Gly70 and Asn99. Catalysis depends on residues Asp180 and His183.

This sequence belongs to the 'GDSL' lipolytic enzyme family. As to quaternary structure, monomer or homotetramer.

The protein resides in the periplasm. It catalyses the reaction a fatty acyl-CoA + H2O = a fatty acid + CoA + H(+). The enzyme catalyses hexadecanoyl-CoA + H2O = hexadecanoate + CoA + H(+). The catalysed reaction is (9Z)-hexadecenoyl-CoA + H2O = (9Z)-hexadecenoate + CoA + H(+). It carries out the reaction octadecanoyl-CoA + H2O = octadecanoate + CoA + H(+). It catalyses the reaction (9Z)-octadecenoyl-CoA + H2O = (9Z)-octadecenoate + CoA + H(+). The enzyme catalyses (9Z)-octadecenoyl-[ACP] + H2O = (9Z)-octadecenoate + holo-[ACP] + H(+). The catalysed reaction is (11Z)-octadecenoyl-CoA + H2O = (11Z)-octadecenoate + CoA + H(+). It carries out the reaction tetradecanoyl-CoA + H2O = tetradecanoate + CoA + H(+). It catalyses the reaction (5Z,8Z,11Z,14Z)-eicosatetraenoyl-CoA + H2O = (5Z,8Z,11Z,14Z)-eicosatetraenoate + CoA + H(+). The enzyme catalyses dodecanoyl-CoA + H2O = dodecanoate + CoA + H(+). The catalysed reaction is decanoyl-CoA + H2O = decanoate + CoA + H(+). It carries out the reaction hexanoyl-CoA + H2O = hexanoate + CoA + H(+). It catalyses the reaction a 1-acyl-sn-glycero-3-phosphocholine + H2O = sn-glycerol 3-phosphocholine + a fatty acid + H(+). The enzyme catalyses a phenyl acetate + H2O = a phenol + acetate + H(+). The catalysed reaction is a butanoate ester + H2O = an aliphatic alcohol + butanoate + H(+). It carries out the reaction a hexanoate ester + H2O = an aliphatic alcohol + hexanoate + H(+). It catalyses the reaction an octanoate ester + H2O = an aliphatic alcohol + octanoate + H(+). Functionally, tesA is a multifunctional esterase that can act as a thioesterase, arylesterase, lysophospholipase and protease. This chain is Thioesterase 1/protease 1/lysophospholipase L1 (tesA), found in Escherichia coli O6:H1 (strain CFT073 / ATCC 700928 / UPEC).